The sequence spans 247 residues: Coiled-coil domain-containing protein 124 homolog (247 aa).

The interval 1–146 (MGGKKFGTNS…TTTTGSDDHE (146 aa)) is disordered. Residues 8–85 (TNSKAEEARS…QEDKEIKERY (78 aa)) are a coiled coil. The segment covering 11 to 114 (KAEEARSKKA…EQKQREKELA (104 aa)) has biased composition (basic and acidic residues). Positions 122–140 (VVVVPTTTTTTTTTTTTTT) are enriched in low complexity.

This sequence belongs to the CCDC124 family. Associates with translationally inactive ribosomes in the nonrotated state.

Ribosome-binding protein involved in ribosome hibernation: associates with translationally inactive ribosomes and stabilizes the nonrotated conformation of the 80S ribosome, thereby promoting ribosome preservation and storage. In Dictyostelium discoideum (Social amoeba), this protein is Coiled-coil domain-containing protein 124 homolog.